We begin with the raw amino-acid sequence, 226 residues long: Urease accessory protein UreF (226 aa).

The protein belongs to the UreF family. As to quaternary structure, ureD, UreF and UreG form a complex that acts as a GTP-hydrolysis-dependent molecular chaperone, activating the urease apoprotein by helping to assemble the nickel containing metallocenter of UreC. The UreE protein probably delivers the nickel.

The protein resides in the cytoplasm. Required for maturation of urease via the functional incorporation of the urease nickel metallocenter. In Janthinobacterium sp. (strain Marseille) (Minibacterium massiliensis), this protein is Urease accessory protein UreF.